The following is a 144-amino-acid chain: Large ribosomal subunit protein uL13 (144 aa).

Belongs to the universal ribosomal protein uL13 family. As to quaternary structure, part of the 50S ribosomal subunit.

This protein is one of the early assembly proteins of the 50S ribosomal subunit, although it is not seen to bind rRNA by itself. It is important during the early stages of 50S assembly. The chain is Large ribosomal subunit protein uL13 from Moorella thermoacetica (strain ATCC 39073 / JCM 9320).